Consider the following 165-residue polypeptide: MNKTAIYPGTFDPITYGHLDIITRATKIFDSITIAISNNFTKKPIFNLKERIELTRKVTLHLKNVKKILGFNDLLANLAKKEKANILIRGVRTIFDFDYEIKLAAINKQIYPDLDSIFLLSSKEVSFISSSFVKEIAKYKGDIKPYLPKEAHSALLRKLNNDSIK.

Threonine 10 lines the substrate pocket. ATP contacts are provided by residues 10–11 (TF) and histidine 18. The substrate site is built by lysine 42, leucine 75, and arginine 89. Residues 90–92 (GVR), glutamate 100, and 125–131 (VSFISSS) contribute to the ATP site.

It belongs to the bacterial CoaD family. Homohexamer. Requires Mg(2+) as cofactor.

The protein resides in the cytoplasm. The catalysed reaction is (R)-4'-phosphopantetheine + ATP + H(+) = 3'-dephospho-CoA + diphosphate. The protein operates within cofactor biosynthesis; coenzyme A biosynthesis; CoA from (R)-pantothenate: step 4/5. In terms of biological role, reversibly transfers an adenylyl group from ATP to 4'-phosphopantetheine, yielding dephospho-CoA (dPCoA) and pyrophosphate. The sequence is that of Phosphopantetheine adenylyltransferase from Buchnera aphidicola subsp. Acyrthosiphon pisum (strain 5A).